A 401-amino-acid chain; its full sequence is tRNA(Met) cytidine acetate ligase (401 aa).

Residues I7–H20, G102, N164, and R189 contribute to the ATP site.

Belongs to the TmcAL family.

It localises to the cytoplasm. The catalysed reaction is cytidine(34) in elongator tRNA(Met) + acetate + ATP = N(4)-acetylcytidine(34) in elongator tRNA(Met) + AMP + diphosphate. Functionally, catalyzes the formation of N(4)-acetylcytidine (ac(4)C) at the wobble position of elongator tRNA(Met), using acetate and ATP as substrates. First activates an acetate ion to form acetyladenylate (Ac-AMP) and then transfers the acetyl group to tRNA to form ac(4)C34. This chain is tRNA(Met) cytidine acetate ligase, found in Thermoanaerobacter pseudethanolicus (strain ATCC 33223 / 39E) (Clostridium thermohydrosulfuricum).